Consider the following 51-residue polypeptide: Mating pheromone Er-23 (51 aa).

5 cysteine pairs are disulfide-bonded: cysteine 3–cysteine 24, cysteine 6–cysteine 16, cysteine 13–cysteine 47, cysteine 27–cysteine 40, and cysteine 35–cysteine 51.

The protein resides in the secreted. Mating ciliate pheromones (or gamones) are diffusible extracellular communication signals that distinguish different intraspecific classes of cells commonly referred to as 'mating types'. They prepare the latter for conjugation by changing their cell surface properties. The sequence is that of Mating pheromone Er-23 (MAT23) from Euplotes raikovi.